Reading from the N-terminus, the 275-residue chain is 4-hydroxy-tetrahydrodipicolinate reductase (275 aa).

NAD(+)-binding positions include 13 to 18 (GAAGKM) and 108 to 110 (GTT). His-164 serves as the catalytic Proton donor/acceptor. His-165 is a (S)-2,3,4,5-tetrahydrodipicolinate binding site. Lys-168 functions as the Proton donor in the catalytic mechanism. 174–175 (GT) provides a ligand contact to (S)-2,3,4,5-tetrahydrodipicolinate.

The protein belongs to the DapB family.

It localises to the cytoplasm. The catalysed reaction is (S)-2,3,4,5-tetrahydrodipicolinate + NAD(+) + H2O = (2S,4S)-4-hydroxy-2,3,4,5-tetrahydrodipicolinate + NADH + H(+). It catalyses the reaction (S)-2,3,4,5-tetrahydrodipicolinate + NADP(+) + H2O = (2S,4S)-4-hydroxy-2,3,4,5-tetrahydrodipicolinate + NADPH + H(+). It functions in the pathway amino-acid biosynthesis; L-lysine biosynthesis via DAP pathway; (S)-tetrahydrodipicolinate from L-aspartate: step 4/4. Functionally, catalyzes the conversion of 4-hydroxy-tetrahydrodipicolinate (HTPA) to tetrahydrodipicolinate. This Cyanothece sp. (strain PCC 7425 / ATCC 29141) protein is 4-hydroxy-tetrahydrodipicolinate reductase.